The chain runs to 139 residues: Putative nickel-responsive regulator (139 aa).

Ni(2+)-binding residues include H79, H90, H92, and C98.

It belongs to the transcriptional regulatory CopG/NikR family. Ni(2+) serves as cofactor.

Functionally, transcriptional regulator. The protein is Putative nickel-responsive regulator of Geobacter sulfurreducens (strain ATCC 51573 / DSM 12127 / PCA).